The sequence spans 627 residues: 1-deoxy-D-xylulose-5-phosphate synthase (627 aa).

Residues histidine 76 and 117-119 (SHA) contribute to the thiamine diphosphate site. Aspartate 148 contributes to the Mg(2+) binding site. Thiamine diphosphate-binding positions include 149 to 150 (GA), asparagine 178, phenylalanine 288, and glutamate 370. Asparagine 178 contributes to the Mg(2+) binding site.

Belongs to the transketolase family. DXPS subfamily. Homodimer. Mg(2+) is required as a cofactor. It depends on thiamine diphosphate as a cofactor.

The catalysed reaction is D-glyceraldehyde 3-phosphate + pyruvate + H(+) = 1-deoxy-D-xylulose 5-phosphate + CO2. It participates in metabolic intermediate biosynthesis; 1-deoxy-D-xylulose 5-phosphate biosynthesis; 1-deoxy-D-xylulose 5-phosphate from D-glyceraldehyde 3-phosphate and pyruvate: step 1/1. Functionally, catalyzes the acyloin condensation reaction between C atoms 2 and 3 of pyruvate and glyceraldehyde 3-phosphate to yield 1-deoxy-D-xylulose-5-phosphate (DXP). This chain is 1-deoxy-D-xylulose-5-phosphate synthase, found in Cutibacterium acnes (strain DSM 16379 / KPA171202) (Propionibacterium acnes).